Consider the following 1014-residue polypeptide: Klotho (1014 aa).

An N-terminal signal peptide occupies residues 1 to 34 (MLARAPPRRPPRLVLLRLLLLHLLLLALRARCLS). Over 35 to 982 (AEPGQGAQTW…TECGFFQTRK (948 aa)) the chain is Extracellular. 2 glycosyl hydrolase-1 regions span residues 59–508 (LHDT…DNGF) and 517–955 (LEGT…SNGF). N-linked (GlcNAc...) asparagine glycans are attached at residues Asn161, Asn285, Asn346, Asn609, Asn614, and Asn696. A helical transmembrane segment spans residues 983–1003 (SLLVFISFLVFTFIISLALIF). Residues 1004 to 1014 (HYSKKGQRSYK) lie on the Cytoplasmic side of the membrane.

The protein belongs to the glycosyl hydrolase 1 family. Klotho subfamily. In terms of assembly, homodimer. Interacts with FGF23 and FGFR1. Post-translationally, N-glycosylated. As to expression, membrane-bound protein is present in distal renal tubules, inner ear, ependymal cells of brain choroid plexus, elongating spermatids and mature oocytes (at protein level). Soluble peptide is present in serum (100 pM) and cerebrospinal fluid. Expressed strongly in kidney, moderately in brain choroid plexus, and at low levels in pituitary, placenta, skeletal muscle, urinary bladder, aorta, pancreas, testis, ovary, colon, thyroid gland and adipocytes.

It localises to the cell membrane. Its subcellular location is the apical cell membrane. It is found in the secreted. The catalysed reaction is a beta-D-glucuronoside + H2O = D-glucuronate + an alcohol. Inhibited by D-saccharic acid 1,4-lactone and taurocholic acid. Its function is as follows. May have weak glycosidase activity towards glucuronylated steroids. However, it lacks essential active site Glu residues at positions 241 and 874, suggesting it may be inactive as a glycosidase in vivo. May be involved in the regulation of calcium and phosphorus homeostasis by inhibiting the synthesis of active vitamin D. Essential factor for the specific interaction between FGF23 and FGFR1. The Klotho peptide generated by cleavage of the membrane-bound isoform may be an anti-aging circulating hormone which would extend life span by inhibiting insulin/IGF1 signaling. The sequence is that of Klotho (Kl) from Mus musculus (Mouse).